A 500-amino-acid polypeptide reads, in one-letter code: Glucose-6-phosphate 1-dehydrogenase (500 aa).

NADP(+) contacts are provided by residues 18-25 (GASGDLSK), Arg52, and Lys155. D-glucose 6-phosphate contacts are provided by residues Lys155, 185 to 189 (HYLGK), Glu223, and Asp242. The active-site Proton acceptor is His247. Lys338 lines the NADP(+) pocket. A D-glucose 6-phosphate-binding site is contributed by Lys341. The NADP(+) site is built by Lys347, Arg351, and Arg373. Position 375 (Gln375) interacts with D-glucose 6-phosphate. NADP(+)-binding positions include 381–383 (YFK), 401–403 (DLT), and Tyr483.

It belongs to the glucose-6-phosphate dehydrogenase family.

It localises to the cytoplasm. It is found in the cytosol. The catalysed reaction is D-glucose 6-phosphate + NADP(+) = 6-phospho-D-glucono-1,5-lactone + NADPH + H(+). The protein operates within carbohydrate degradation; pentose phosphate pathway; D-ribulose 5-phosphate from D-glucose 6-phosphate (oxidative stage): step 1/3. Catalyzes the rate-limiting step of the oxidative pentose-phosphate pathway, which represents a route for the dissimilation of carbohydrates besides glycolysis. The main function of this enzyme is to provide reducing power (NADPH) and pentose phosphates for fatty acid and nucleic acid synthesis. The protein is Glucose-6-phosphate 1-dehydrogenase of Schizosaccharomyces pombe (strain 972 / ATCC 24843) (Fission yeast).